Reading from the N-terminus, the 126-residue chain is Aspartate 1-decarboxylase (126 aa).

S25 serves as the catalytic Schiff-base intermediate with substrate; via pyruvic acid. S25 is subject to Pyruvic acid (Ser). Substrate is bound at residue T57. Y58 acts as the Proton donor in catalysis. G73 to A75 provides a ligand contact to substrate.

Belongs to the PanD family. In terms of assembly, heterooctamer of four alpha and four beta subunits. Requires pyruvate as cofactor. In terms of processing, is synthesized initially as an inactive proenzyme, which is activated by self-cleavage at a specific serine bond to produce a beta-subunit with a hydroxyl group at its C-terminus and an alpha-subunit with a pyruvoyl group at its N-terminus.

The protein localises to the cytoplasm. It catalyses the reaction L-aspartate + H(+) = beta-alanine + CO2. It functions in the pathway cofactor biosynthesis; (R)-pantothenate biosynthesis; beta-alanine from L-aspartate: step 1/1. Functionally, catalyzes the pyruvoyl-dependent decarboxylation of aspartate to produce beta-alanine. The polypeptide is Aspartate 1-decarboxylase (Tolumonas auensis (strain DSM 9187 / NBRC 110442 / TA 4)).